We begin with the raw amino-acid sequence, 120 residues long: Small ribosomal subunit protein uS13 (120 aa).

The tract at residues 93 to 120 (RRGLPCRGQKTKTNARTRKGKRKTVGAA) is disordered.

This sequence belongs to the universal ribosomal protein uS13 family. In terms of assembly, part of the 30S ribosomal subunit. Forms a loose heterodimer with protein S19. Forms two bridges to the 50S subunit in the 70S ribosome.

Its function is as follows. Located at the top of the head of the 30S subunit, it contacts several helices of the 16S rRNA. In the 70S ribosome it contacts the 23S rRNA (bridge B1a) and protein L5 of the 50S subunit (bridge B1b), connecting the 2 subunits; these bridges are implicated in subunit movement. Contacts the tRNAs in the A and P-sites. The polypeptide is Small ribosomal subunit protein uS13 (Sulfurovum sp. (strain NBC37-1)).